The sequence spans 536 residues: uncharacterized protein (536 aa).

2 disordered regions span residues 1-76 (MSFT…SPAS) and 204-237 (NWNSSSSFTSSTSSTPISSSYSSSGTLPSKSNKS). 2 stretches are compositionally biased toward low complexity: residues 7-76 (TSSV…SPAS) and 204-234 (NWNSSSSFTSSTSSTPISSSYSSSGTLPSKS). Residues 247 to 267 (CSVAIPVGVVLILIGLGIFLW) traverse the membrane as a helical segment. 2 disordered regions span residues 287–354 (YGFN…LLGG) and 373–536 (DASD…LNLF). Over residues 290 to 326 (NPNQPSNFRSPNRAPSTNNRYRGWNGSPTPAAGNNTN) the composition is skewed to polar residues. Residues 327–350 (GRPVAPRPSAGAGGANPPAASQPG) show a composition bias toward low complexity. A helical transmembrane segment spans residues 351-371 (LLGGSSNSAGPIAAATAAGVG). The segment covering 403-424 (SASNEAEATMPPSNGSNFSEGL) has biased composition (polar residues). The segment covering 430–454 (ESGPAVGAAGAAAEAAEHSGSGSDS) has biased composition (low complexity). Positions 480–509 (SYGSRAALSSRSQSNLLSPTSTGASNQPNY) are enriched in polar residues. Residues 517–527 (SSSNVSIPRSS) are compositionally biased toward low complexity.

The protein resides in the membrane. This is an uncharacterized protein from Schizosaccharomyces pombe (strain 972 / ATCC 24843) (Fission yeast).